The following is a 309-amino-acid chain: 2-phospho-L-lactate transferase (309 aa).

7,8-didemethyl-8-hydroxy-5-deazariboflavin contacts are provided by aspartate 50 and arginine 89.

Belongs to the CofD family. As to quaternary structure, homodimer. Mg(2+) is required as a cofactor.

It carries out the reaction (2S)-lactyl-2-diphospho-5'-guanosine + 7,8-didemethyl-8-hydroxy-5-deazariboflavin = oxidized coenzyme F420-0 + GMP + H(+). It functions in the pathway cofactor biosynthesis; coenzyme F420 biosynthesis. Functionally, catalyzes the transfer of the 2-phospholactate moiety from (2S)-lactyl-2-diphospho-5'-guanosine to 7,8-didemethyl-8-hydroxy-5-deazariboflavin (FO) with the formation of oxidized coenzyme F420-0 and GMP. In Methanococcus maripaludis (strain DSM 14266 / JCM 13030 / NBRC 101832 / S2 / LL), this protein is 2-phospho-L-lactate transferase.